A 426-amino-acid chain; its full sequence is Enolase (426 aa).

Gln165 is a (2R)-2-phosphoglycerate binding site. Glu209 serves as the catalytic Proton donor. Mg(2+) is bound by residues Asp244, Glu287, and Asp313. Positions 338, 367, 368, and 389 each coordinate (2R)-2-phosphoglycerate. Lys338 functions as the Proton acceptor in the catalytic mechanism.

It belongs to the enolase family. The cofactor is Mg(2+).

It localises to the cytoplasm. It is found in the secreted. Its subcellular location is the cell surface. The enzyme catalyses (2R)-2-phosphoglycerate = phosphoenolpyruvate + H2O. Its pathway is carbohydrate degradation; glycolysis; pyruvate from D-glyceraldehyde 3-phosphate: step 4/5. Catalyzes the reversible conversion of 2-phosphoglycerate (2-PG) into phosphoenolpyruvate (PEP). It is essential for the degradation of carbohydrates via glycolysis. This chain is Enolase, found in Methanococcus maripaludis (strain C5 / ATCC BAA-1333).